The chain runs to 247 residues: tRNA (guanine-N(1)-)-methyltransferase (247 aa).

Gly126 is a binding site for S-adenosyl-L-methionine.

It belongs to the RNA methyltransferase TrmD family. As to quaternary structure, homodimer.

The protein localises to the cytoplasm. It carries out the reaction guanosine(37) in tRNA + S-adenosyl-L-methionine = N(1)-methylguanosine(37) in tRNA + S-adenosyl-L-homocysteine + H(+). In terms of biological role, specifically methylates guanosine-37 in various tRNAs. This Jannaschia sp. (strain CCS1) protein is tRNA (guanine-N(1)-)-methyltransferase.